Consider the following 59-residue polypeptide: Cecropin-C type 2 (59 aa).

A signal peptide spans 1–23 (MNFAKVFVLVAMAVLLLVGQSEA).

The protein belongs to the cecropin family.

Its subcellular location is the secreted. In terms of biological role, cecropins have lytic and antibacterial activity against several Gram-positive and Gram-negative bacteria. In Aedes albopictus (Asian tiger mosquito), this protein is Cecropin-C type 2 (CECC2).